A 285-amino-acid chain; its full sequence is Aquaporin-6 (285 aa).

The next 3 helical transmembrane spans lie at Ile-36–Cys-56, Tyr-76–Leu-96, and Ile-105–Gly-125. Residues Asn-86–Val-88 carry the NPA 1 motif. A glycan (N-linked (GlcNAc...) asparagine) is linked at Asn-128. The next 2 helical transmembrane spans lie at Val-143 to Met-163 and Gly-177 to Ala-197. The NPA 2 motif lies at Asn-206–Met-208. Residues Tyr-225–Thr-245 form a helical membrane-spanning segment.

This sequence belongs to the MIP/aquaporin (TC 1.A.8) family.

The protein resides in the cell membrane. Its function is as follows. Probable water-specific aquaporin that may modulate the water content and osmolytes during anhydrobiosis. This is Aquaporin-6 from Milnesium tardigradum (Water bear).